A 43-amino-acid polypeptide reads, in one-letter code: ORF7b protein (43 aa).

The helical transmembrane segment at 9–29 threads the bilayer; the sequence is FYLCFLAFLLFLVLIMLIIFW.

It is found in the host Golgi apparatus membrane. The protein localises to the host endosome membrane. The polypeptide is ORF7b protein (Homo sapiens (Human)).